A 1193-amino-acid chain; its full sequence is Sperm-associated antigen 5 (1193 aa).

The disordered stretch occupies residues Met1–Ser48. 5 positions are modified to phosphoserine: Ser12, Ser14, Ser43, Ser62, and Ser66. Positions Ala35–Ser48 are enriched in polar residues. The segment at Glu96–Glu117 is disordered. At Thr111 the chain carries Phosphothreonine; by GSK3-beta. Residues Ser135, Ser159, and Ser334 each carry the phosphoserine modification. Phosphothreonine is present on Thr336. Phosphoserine occurs at positions 341, 353, and 362. Polar residues predominate over residues Pro390–Leu405. The tract at residues Pro390 to Glu416 is disordered. The interaction with KNSTRN stretch occupies residues Asn482–Ala850. Coiled-coil stretches lie at residues Cys545–Glu608 and Gln759–Arg868. At Thr937 the chain carries Phosphothreonine; by GSK3-beta. Ser974 is subject to Phosphoserine; by GSK3-beta. Thr978 bears the Phosphothreonine; by GSK3-beta mark. Positions Glu979–Ser1174 form a coiled coil.

Homodimer, with a globular head domain and a long stalk. Homooligomer; the globular head domains associate, resulting in aster-like structures. Binds to microtubules in the mitotic spindle. Interacts with DCLRE1B/Apollo. Part of an astrin (SPAG5)-kinastrin (SKAP) complex containing KNSTRN, SPAG5, PLK1, DYNLL1 and SGO2. Interacts with KNSTRN. Interacts with RPTOR; this interaction competes with RPTOR binding to MTOR, resulting in decreased mTORC1 formation. Interacts with G3BP1. The complex formed with G3BP1 AND RPTOR is increased by oxidative stress. Interacts with OSBPL8, PCM1 and CDK5RAP2. Interacts (via C-terminus) with NUMA1 (via C-terminus); this interaction promotes the recruitment of SPAG5 to the microtubules at spindle poles in a dynein-dynactin-dependent manner. Interacts with DYNLL1. In terms of processing, phosphorylated by AURKA. In terms of tissue distribution, highly expressed in testis. Detected at low levels in placenta, liver, pancreas, thymus and colon.

The protein localises to the cytoplasm. The protein resides in the cytoskeleton. Its subcellular location is the spindle. It localises to the spindle pole. It is found in the chromosome. The protein localises to the centromere. The protein resides in the kinetochore. Its subcellular location is the midbody. It localises to the microtubule organizing center. It is found in the centrosome. The protein localises to the cytoplasmic granule. The protein resides in the centriolar satellite. Functionally, essential component of the mitotic spindle required for normal chromosome segregation and progression into anaphase. Required for chromosome alignment, normal timing of sister chromatid segregation, and maintenance of spindle pole architecture. In complex with SKAP, promotes stable microtubule-kinetochore attachments. May contribute to the regulation of separase activity. May regulate AURKA localization to mitotic spindle, but not to centrosomes and CCNB1 localization to both mitotic spindle and centrosomes. Involved in centriole duplication. Required for CDK5RAP2, CEP152, WDR62 and CEP63 centrosomal localization and promotes the centrosomal localization of CDK2. In non-mitotic cells, upon stress induction, inhibits mammalian target of rapamycin complex 1 (mTORC1) association and recruits the mTORC1 component RPTOR to stress granules (SGs), thereby preventing mTORC1 hyperactivation-induced apoptosis. May enhance GSK3B-mediated phosphorylation of other substrates, such as MAPT/TAU. This chain is Sperm-associated antigen 5 (SPAG5), found in Homo sapiens (Human).